Consider the following 420-residue polypeptide: Pyridinium-3,5-bisthiocarboxylic acid mononucleotide nickel insertion protein (420 aa).

Belongs to the LarC family.

The enzyme catalyses Ni(II)-pyridinium-3,5-bisthiocarboxylate mononucleotide = pyridinium-3,5-bisthiocarboxylate mononucleotide + Ni(2+). In terms of biological role, involved in the biosynthesis of a nickel-pincer cofactor ((SCS)Ni(II) pincer complex). Binds Ni(2+), and functions in nickel delivery to pyridinium-3,5-bisthiocarboxylic acid mononucleotide (P2TMN), to form the mature cofactor. Is required for the activation of the lactate racemase LarA. May also be involved in the activation of other nickel-pincer cofactor-dependent enzymes. This chain is Pyridinium-3,5-bisthiocarboxylic acid mononucleotide nickel insertion protein, found in Lactiplantibacillus plantarum (strain ATCC BAA-793 / NCIMB 8826 / WCFS1) (Lactobacillus plantarum).